A 345-amino-acid polypeptide reads, in one-letter code: Tryptophan--tRNA ligase (345 aa).

Residues 21 to 23 and 30 to 31 contribute to the ATP site; these read QPT and GN. A 'HIGH' region motif is present at residues 22–31; it reads PTADSYHLGN. L-tryptophan is bound at residue aspartate 147. Residues 159-161, isoleucine 198, and 207-211 each bind ATP; these read GED and KMSKS. Residues 207 to 211 carry the 'KMSKS' region motif; the sequence is KMSKS.

It belongs to the class-I aminoacyl-tRNA synthetase family. As to quaternary structure, homodimer.

Its subcellular location is the cytoplasm. It catalyses the reaction tRNA(Trp) + L-tryptophan + ATP = L-tryptophyl-tRNA(Trp) + AMP + diphosphate + H(+). In terms of biological role, catalyzes the attachment of tryptophan to tRNA(Trp). This is Tryptophan--tRNA ligase from Corynebacterium glutamicum (strain ATCC 13032 / DSM 20300 / JCM 1318 / BCRC 11384 / CCUG 27702 / LMG 3730 / NBRC 12168 / NCIMB 10025 / NRRL B-2784 / 534).